The following is a 156-amino-acid chain: Small ribosomal subunit protein uS7 (156 aa).

It belongs to the universal ribosomal protein uS7 family. As to quaternary structure, part of the 30S ribosomal subunit. Contacts proteins S9 and S11.

Functionally, one of the primary rRNA binding proteins, it binds directly to 16S rRNA where it nucleates assembly of the head domain of the 30S subunit. Is located at the subunit interface close to the decoding center, probably blocks exit of the E-site tRNA. This is Small ribosomal subunit protein uS7 from Nocardioides sp. (strain ATCC BAA-499 / JS614).